Reading from the N-terminus, the 247-residue chain is ATP synthase subunit a, chloroplastic (247 aa).

Helical transmembrane passes span 38-58 (QVLITSWFVIAILLGSAIIAV), 95-115 (VPFIGTMFLFIFVSNWSGALL), 134-154 (INTTVALALPTSVAYFYAGLT), 199-219 (LVVVVLVSLVPSVVPIPVMFL), and 220-240 (GLFTSGIQALIFATLAAAYIG).

The protein belongs to the ATPase A chain family. As to quaternary structure, F-type ATPases have 2 components, CF(1) - the catalytic core - and CF(0) - the membrane proton channel. CF(1) has five subunits: alpha(3), beta(3), gamma(1), delta(1), epsilon(1). CF(0) has four main subunits: a, b, b' and c.

The protein resides in the plastid. It is found in the chloroplast thylakoid membrane. In terms of biological role, key component of the proton channel; it plays a direct role in the translocation of protons across the membrane. The chain is ATP synthase subunit a, chloroplastic from Ranunculus macranthus (Large buttercup).